A 572-amino-acid polypeptide reads, in one-letter code: Hemagglutinin-neuraminidase (572 aa).

The Intravirion portion of the chain corresponds to 1–31; the sequence is MEYWKHTNHGKDAGNELETSMATHGNKLTNK. Residues 32 to 52 traverse the membrane as a helical segment; it reads IIYILWTIILVLLSIVFIIVL. Residues 53-572 lie on the Virion surface side of the membrane; sequence INSIKSEKAH…FKTEIPKSCS (520 aa). 2 disulfides stabilise this stretch: Cys190-Cys214 and Cys256-Cys269. Residues 252–257 form an involved in neuraminidase activity region; the sequence is NRKSCS. N-linked (GlcNAc...) asparagine; by host glycosylation is found at Asn308 and Asn351. 2 disulfides stabilise this stretch: Cys355–Cys469 and Cys463–Cys473. Asn523 is a glycosylation site (N-linked (GlcNAc...) asparagine; by host). Cys535 and Cys544 are oxidised to a cystine.

This sequence belongs to the paramyxoviruses hemagglutinin-neuraminidase family. As to quaternary structure, homotetramer; composed of disulfide-linked homodimers. Interacts with F protein trimer.

The protein resides in the virion membrane. It is found in the host cell membrane. It carries out the reaction Hydrolysis of alpha-(2-&gt;3)-, alpha-(2-&gt;6)-, alpha-(2-&gt;8)- glycosidic linkages of terminal sialic acid residues in oligosaccharides, glycoproteins, glycolipids, colominic acid and synthetic substrates.. Attaches the virus to sialic acid-containing cell receptors and thereby initiating infection. Binding of HN protein to the receptor induces a conformational change that allows the F protein to trigger virion/cell membranes fusion. Its function is as follows. Neuraminidase activity ensures the efficient spread of the virus by dissociating the mature virions from the neuraminic acid containing glycoproteins. This chain is Hemagglutinin-neuraminidase (HN), found in Homo sapiens (Human).